The chain runs to 440 residues: ATP-dependent protease ATPase subunit HslU (440 aa).

ATP contacts are provided by residues Ile-18, 60–65, Asp-253, Glu-318, and Arg-390; that span reads GVGKTE.

The protein belongs to the ClpX chaperone family. HslU subfamily. A double ring-shaped homohexamer of HslV is capped on each side by a ring-shaped HslU homohexamer. The assembly of the HslU/HslV complex is dependent on binding of ATP.

It localises to the cytoplasm. Its function is as follows. ATPase subunit of a proteasome-like degradation complex; this subunit has chaperone activity. The binding of ATP and its subsequent hydrolysis by HslU are essential for unfolding of protein substrates subsequently hydrolyzed by HslV. HslU recognizes the N-terminal part of its protein substrates and unfolds these before they are guided to HslV for hydrolysis. The chain is ATP-dependent protease ATPase subunit HslU from Shewanella oneidensis (strain ATCC 700550 / JCM 31522 / CIP 106686 / LMG 19005 / NCIMB 14063 / MR-1).